Consider the following 604-residue polypeptide: Putative JmjC domain-containing protein L887 (604 aa).

The 127-residue stretch at 1 to 127 folds into the JmjC domain; sequence MNNMKKIIII…PNNKLNLIQP (127 aa). The chain crosses the membrane as a helical span at residues 4–24; it reads MKKIIIISIIIIIIIVLLFYI.

The protein resides in the membrane. The sequence is that of Putative JmjC domain-containing protein L887 from Acanthamoeba polyphaga (Amoeba).